Here is a 266-residue protein sequence, read N- to C-terminus: Large ribosomal subunit protein eL8 (266 aa).

The segment covering 104–130 has biased composition (basic and acidic residues); that stretch reads PETKQEKKQRLLARAEQKAAGKGDTPT. Residues 104–135 form a disordered region; that stretch reads PETKQEKKQRLLARAEQKAAGKGDTPTKRPPV.

Belongs to the eukaryotic ribosomal protein eL8 family. As to quaternary structure, component of the large ribosomal subunit.

It localises to the cytoplasm. Its function is as follows. Component of the large ribosomal subunit. The ribosome is a large ribonucleoprotein complex responsible for the synthesis of proteins in the cell. The polypeptide is Large ribosomal subunit protein eL8 (RPL7A) (Gallus gallus (Chicken)).